A 179-amino-acid polypeptide reads, in one-letter code: Large ribosomal subunit protein uL6 (179 aa).

This sequence belongs to the universal ribosomal protein uL6 family. In terms of assembly, part of the 50S ribosomal subunit.

Functionally, this protein binds to the 23S rRNA, and is important in its secondary structure. It is located near the subunit interface in the base of the L7/L12 stalk, and near the tRNA binding site of the peptidyltransferase center. This chain is Large ribosomal subunit protein uL6, found in Geotalea daltonii (strain DSM 22248 / JCM 15807 / FRC-32) (Geobacter daltonii).